The sequence spans 856 residues: Protein phosphatase 2C 32 (856 aa).

Residues S152, S189, and S201 each carry the phosphoserine modification. One can recognise a PPM-type phosphatase domain in the interval 269-835; that stretch reads ESCLESNRNL…DDVSVMVVSL (567 aa). Residues D307 and G308 each coordinate Mn(2+). 3 disordered regions span residues 340–373, 388–407, and 446–485; these read PSED…KSVV, GNTD…GPGK, and NPST…QISS. Residues 395–407 show a composition bias toward low complexity; the sequence is ADGPPGDSAGPGK. Positions 471-485 are enriched in polar residues; sequence NSGQRHGTKKSQISS. D763 and D826 together coordinate Mn(2+).

The protein belongs to the PP2C family. Mg(2+) serves as cofactor. Requires Mn(2+) as cofactor. As to expression, expressed in roots, leaves, stems, inflorescences, flowers and throughout the shoot meristem.

It is found in the nucleus. The enzyme catalyses O-phospho-L-seryl-[protein] + H2O = L-seryl-[protein] + phosphate. It catalyses the reaction O-phospho-L-threonyl-[protein] + H2O = L-threonyl-[protein] + phosphate. With respect to regulation, insensitive to okadaic acid. Involved in the regulation of pedicel length and of CLAVATA pathways controlling stem cell identity at shoot and flower meristems. The chain is Protein phosphatase 2C 32 (POL) from Arabidopsis thaliana (Mouse-ear cress).